The primary structure comprises 70 residues: Sec-independent protein translocase protein TatA (70 aa).

Residues 1–21 form a helical membrane-spanning segment; it reads MGSFSIWHWLIVLVVVALLFG. The segment at 45–70 is disordered; that stretch reads KGESEQAEDETAKPLPKERDKDSARG.

It belongs to the TatA/E family. The Tat system comprises two distinct complexes: a TatABC complex, containing multiple copies of TatA, TatB and TatC subunits, and a separate TatA complex, containing only TatA subunits. Substrates initially bind to the TatABC complex, which probably triggers association of the separate TatA complex to form the active translocon.

The protein resides in the cell inner membrane. Part of the twin-arginine translocation (Tat) system that transports large folded proteins containing a characteristic twin-arginine motif in their signal peptide across membranes. TatA could form the protein-conducting channel of the Tat system. This chain is Sec-independent protein translocase protein TatA, found in Phenylobacterium zucineum (strain HLK1).